The primary structure comprises 304 residues: Ribonuclease Z (304 aa).

Zn(2+)-binding residues include His-61, His-63, Asp-65, His-66, His-138, Asp-206, and His-265. Asp-65 functions as the Proton acceptor in the catalytic mechanism.

The protein belongs to the RNase Z family. As to quaternary structure, homodimer. It depends on Zn(2+) as a cofactor.

It carries out the reaction Endonucleolytic cleavage of RNA, removing extra 3' nucleotides from tRNA precursor, generating 3' termini of tRNAs. A 3'-hydroxy group is left at the tRNA terminus and a 5'-phosphoryl group is left at the trailer molecule.. In terms of biological role, zinc phosphodiesterase, which displays some tRNA 3'-processing endonuclease activity. Probably involved in tRNA maturation, by removing a 3'-trailer from precursor tRNA. The sequence is that of Ribonuclease Z from Lachnospira eligens (strain ATCC 27750 / DSM 3376 / VPI C15-48 / C15-B4) (Eubacterium eligens).